A 533-amino-acid polypeptide reads, in one-letter code: Zinc finger protein 26 (533 aa).

Residues 14–85 (LSFKDISMEF…NAKISRQSCP (72 aa)) form the KRAB domain. C2H2-type zinc fingers lie at residues 174–196 (CVCSECGKAFRCKSQLIVHLRIH), 202–224 (YECSKCERAFSAKSNLNAHQRVH), 230–252 (YSCSECEKVFSFRSQLIVHQEIH), 258–280 (YGCSECGKAYSWKSQLLLHQRSH), 286–308 (YECSECGKAFSLKSPFVVHQRTH), 314–336 (HKCSECGKAFRSKSYLLVHIRMH), 342–364 (YQCSDCGKAFNMKTQLIVHQGVH), 370–392 (YQCGECGKAFGRKEQLTAHLRAH), 398–420 (YGCSECGKAFSSKSYLVIHRRTH), 426–448 (YECSLCERAFCGKSQLIIHQRTH), 454–476 (YECNECEKAYPRKASLQIHQKTH), 482–504 (FKCSECGKAFTQKSSLSEHQRVH), and 510–532 (WKCSECGKSFCWNSGLRIHRKTH).

This sequence belongs to the krueppel C2H2-type zinc-finger protein family.

Its subcellular location is the nucleus. Functionally, may be involved in transcriptional regulation. This is Zinc finger protein 26 (ZNF26) from Homo sapiens (Human).